The chain runs to 259 residues: Thiazole synthase (259 aa).

Lysine 95 functions as the Schiff-base intermediate with DXP in the catalytic mechanism. Residues glycine 156, alanine 182–glycine 183, and alanine 204–serine 205 each bind 1-deoxy-D-xylulose 5-phosphate.

It belongs to the ThiG family. Homotetramer. Forms heterodimers with either ThiH or ThiS.

It is found in the cytoplasm. It carries out the reaction [ThiS sulfur-carrier protein]-C-terminal-Gly-aminoethanethioate + 2-iminoacetate + 1-deoxy-D-xylulose 5-phosphate = [ThiS sulfur-carrier protein]-C-terminal Gly-Gly + 2-[(2R,5Z)-2-carboxy-4-methylthiazol-5(2H)-ylidene]ethyl phosphate + 2 H2O + H(+). The protein operates within cofactor biosynthesis; thiamine diphosphate biosynthesis. Its function is as follows. Catalyzes the rearrangement of 1-deoxy-D-xylulose 5-phosphate (DXP) to produce the thiazole phosphate moiety of thiamine. Sulfur is provided by the thiocarboxylate moiety of the carrier protein ThiS. In vitro, sulfur can be provided by H(2)S. The sequence is that of Thiazole synthase from Corynebacterium efficiens (strain DSM 44549 / YS-314 / AJ 12310 / JCM 11189 / NBRC 100395).